A 351-amino-acid chain; its full sequence is Adenine deaminase (351 aa).

H20, H22, and H200 together coordinate Zn(2+). Residue E203 is the Proton donor of the active site. Zn(2+) is bound at residue D281. A substrate-binding site is contributed by D282.

This sequence belongs to the metallo-dependent hydrolases superfamily. Adenosine and AMP deaminases family. Adenine deaminase type 2 subfamily. Requires Zn(2+) as cofactor.

It carries out the reaction adenine + H2O + H(+) = hypoxanthine + NH4(+). In terms of biological role, catalyzes the hydrolytic deamination of adenine to hypoxanthine. Plays an important role in the purine salvage pathway and in nitrogen catabolism. In Cupriavidus pinatubonensis (strain JMP 134 / LMG 1197) (Cupriavidus necator (strain JMP 134)), this protein is Adenine deaminase.